We begin with the raw amino-acid sequence, 328 residues long: uncharacterized protein (328 aa).

Residue Ser170 is modified to Phosphoserine.

It is found in the cytoplasm. Its subcellular location is the nucleus. This is an uncharacterized protein from Schizosaccharomyces pombe (strain 972 / ATCC 24843) (Fission yeast).